The chain runs to 317 residues: Gamma-glutamyl hydrolase (317 aa).

The N-terminal stretch at 1 to 24 (MANLGYLLCLLGLLLCGLSSPGMS) is a signal peptide. Residues 25-317 (RPYNHGSERP…SSFQQAYMFD (293 aa)) enclose the Gamma-glutamyl hydrolase domain. The N-linked (GlcNAc...) (high mannose) asparagine glycan is linked to Asn-100. Cys-133 (nucleophile) is an active-site residue. Asn-162 and Asn-188 each carry an N-linked (GlcNAc...) (high mannose) asparagine glycan. An N-linked (GlcNAc...) asparagine glycan is attached at Asn-202. Catalysis depends on His-243, which acts as the Proton donor. A glycan (N-linked (GlcNAc...) asparagine) is linked at Asn-306.

Belongs to the peptidase C26 family. In terms of assembly, homodimer. Isoform I (more expressed than isoform II in all tissues) is highly expressed in salivary gland, followed by kidney, liver, lung, stomach and uterus, and weakly expressed in small intestine, brain and fetal liver. Also expressed at a lower level in thymus, spleen and skeletal muscle. Also expressed in tumors.

It is found in the secreted. The protein resides in the extracellular space. Its subcellular location is the lysosome. The protein localises to the melanosome. The catalysed reaction is (6S)-5,6,7,8-tetrahydrofolyl-(gamma-L-Glu)(n) + (n-1) H2O = (6S)-5,6,7,8-tetrahydrofolate + (n-1) L-glutamate. Its function is as follows. Hydrolyzes the polyglutamate sidechains of pteroylpolyglutamates. Progressively removes gamma-glutamyl residues from pteroylpoly-gamma-glutamate to yield pteroyl-alpha-glutamate (folic acid) and free glutamate. May play an important role in the bioavailability of dietary pteroylpolyglutamates and in the metabolism of pteroylpolyglutamates and antifolates. The sequence is that of Gamma-glutamyl hydrolase (Ggh) from Mus musculus (Mouse).